Here is a 571-residue protein sequence, read N- to C-terminus: Septation ring formation regulator EzrA (571 aa).

Residues 1–3 (MYY) are Extracellular-facing. A helical transmembrane segment spans residues 4-22 (MLIGFIIVVIAVIGAGYIL). The Cytoplasmic segment spans residues 23–571 (KRKHYQRINE…ASKVSVDDIE (549 aa)). Coiled coils occupy residues 102–147 (ATNA…TKEK), 248–298 (LAQM…DTLE), 326–374 (DALA…ASGE), 400–437 (KFAEELRSLRKDELEARDDAERMRRAIITLDRKMERER), and 478–529 (RIAE…ENHF).

This sequence belongs to the EzrA family.

Its subcellular location is the cell membrane. Negative regulator of FtsZ ring formation; modulates the frequency and position of FtsZ ring formation. Inhibits FtsZ ring formation at polar sites. Interacts either with FtsZ or with one of its binding partners to promote depolymerization. In Listeria monocytogenes serotype 4a (strain HCC23), this protein is Septation ring formation regulator EzrA.